Consider the following 197-residue polypeptide: Inosine triphosphate pyrophosphatase (197 aa).

10–15 serves as a coordination point for ITP; the sequence is TGNANK. Residue E45 coordinates Mg(2+). ITP-binding positions include K58, 76 to 77, K93, 151 to 154, K175, and 180 to 181; these read DT, FGWD, and HR.

This sequence belongs to the HAM1 NTPase family. As to quaternary structure, homodimer. Requires Mg(2+) as cofactor. Mn(2+) serves as cofactor.

The protein resides in the cytoplasm. Its subcellular location is the nucleus. It carries out the reaction ITP + H2O = IMP + diphosphate + H(+). The catalysed reaction is dITP + H2O = dIMP + diphosphate + H(+). The enzyme catalyses XTP + H2O = XMP + diphosphate + H(+). It catalyses the reaction N(6)-hydroxy-dATP + H2O = N(6)-hydroxy-dAMP + diphosphate + H(+). Its function is as follows. Pyrophosphatase that hydrolyzes the non-canonical purine nucleotides inosine triphosphate (ITP), deoxyinosine triphosphate (dITP) as well as 2'-deoxy-N-6-hydroxylaminopurine triphosphate (dHAPTP) and 5-bromodeoxyuridine 5'-triphosphate (BrdUTP) to their respective monophosphate derivatives. Xanthosine 5'-triphosphate (XTP) is also a potential substrate. The enzyme does not distinguish between the deoxy- and ribose forms. Probably excludes non-canonical purines from RNA and DNA precursor pools, thus preventing their incorporation into RNA and DNA and avoiding chromosomal lesions. The polypeptide is Inosine triphosphate pyrophosphatase (Saccharomyces cerevisiae (strain ATCC 204508 / S288c) (Baker's yeast)).